Here is a 265-residue protein sequence, read N- to C-terminus: Chlorophyll a-b binding protein 1A, chloroplastic (265 aa).

The N-terminal 34 residues, 1-34, are a transit peptide targeting the chloroplast; that stretch reads MAAAAMALSSPSFAGQAVKLSPSASENSGNGRIT. Residues 151–171 traverse the membrane as a helical segment; it reads LVHAQSILAIWACQVVLMGAV. Positions 152, 156, 164, 172, 175, and 181 each coordinate chlorophyll b. Residues Lys-212, Glu-213, Asn-216, Arg-218, Gln-230, His-245, and Ala-254 each contribute to the chlorophyll a site. Residues 219–239 form a helical membrane-spanning segment; that stretch reads LAMFSMFGFFVQAIVTGKGPL. Phe-261 is a chlorophyll b binding site.

Belongs to the light-harvesting chlorophyll a/b-binding (LHC) protein family. The LHC complex consists of chlorophyll a-b binding proteins. Binds at least 14 chlorophylls (8 Chl-a and 6 Chl-b) and carotenoids such as lutein and neoxanthin. is required as a cofactor. Photoregulated by reversible phosphorylation of its threonine residues.

It is found in the plastid. The protein localises to the chloroplast thylakoid membrane. The light-harvesting complex (LHC) functions as a light receptor, it captures and delivers excitation energy to photosystems with which it is closely associated. The chain is Chlorophyll a-b binding protein 1A, chloroplastic (CAB1A) from Solanum lycopersicum (Tomato).